Reading from the N-terminus, the 441-residue chain is G2/mitotic-specific cyclin-2 (441 aa).

It belongs to the cyclin family. Cyclin AB subfamily. Interacts with the CDC2 and CDK2 protein kinases to form a serine/threonine kinase holoenzyme complex. The cyclin subunit imparts substrate specificity to the complex.

Essential for the control of the cell cycle at the G2/M (mitosis) transition. G2/M cyclins accumulate steadily during G2 and are abruptly destroyed at mitosis. This Antirrhinum majus (Garden snapdragon) protein is G2/mitotic-specific cyclin-2.